The sequence spans 492 residues: G2/mitotic-specific cyclin CYB1 (492 aa).

A disordered region spans residues 1-176 (MPQVTKTNNE…QPEVGERSQS (176 aa)). A compositionally biased stretch (polar residues) spans 23–33 (QESISTIKNTT). The segment covering 34–58 (ISNSQHKQQTQQQISSPPQVSVTSS) has biased composition (low complexity). Over residues 59–83 (EGVSHVNTRQYLGDVSNQYITNAKP) the composition is skewed to polar residues. Residues 111 to 135 (ASDNNNNGSTSSSSNSSNNNNNDAN) show a composition bias toward low complexity.

This sequence belongs to the cyclin family. Cyclin AB subfamily.

Its function is as follows. Essential for the control of the cell cycle at the G2/M (mitosis) transition. Interacts with the CDC2 protein kinase to form MPF. G2/M cyclins accumulate steadily during G2 and are abruptly destroyed at mitosis. In Candida albicans (Yeast), this protein is G2/mitotic-specific cyclin CYB1 (CYB1).